Consider the following 607-residue polypeptide: Actin-related protein 5 (607 aa).

Residue K283 forms a Glycyl lysine isopeptide (Lys-Gly) (interchain with G-Cter in SUMO2) linkage. Coiled coils occupy residues 288–327 and 355–384; these read TLTSEEKQERRQQQLRRLQELNARRREEKLQLDQERLDRL and EELQSYIQKLSIAVEQAKQKILQAEVNLEV. A compositionally biased stretch (low complexity) spans 584 to 596; the sequence is SRSSDAQASSKGS. A disordered region spans residues 584 to 607; sequence SRSSDAQASSKGSAAGGGGAGEQA. Gly residues predominate over residues 597 to 607; the sequence is AAGGGGAGEQA.

It belongs to the actin family. ARP5 subfamily. Component of the chromatin remodeling INO80 complex; specifically part of a complex module associated with the helicase ATP-binding and the helicase C-terminal domain of INO80. Interacts with DDB1. Interacts with ACTR8; the interaction is observed in asynchronous (interphase) cells but not in metaphase-arrested cells indicative for a possible dissociation of the INO80 complex in mitotic cells.

Its subcellular location is the nucleus. It localises to the cytoplasm. Proposed core component of the chromatin remodeling INO80 complex which is involved in transcriptional regulation, DNA replication and probably DNA repair. Involved in DNA double-strand break repair and UV-damage excision repair. This Homo sapiens (Human) protein is Actin-related protein 5 (ACTR5).